The chain runs to 388 residues: Mannitol-1-phosphate 5-dehydrogenase (388 aa).

5–16 serves as a coordination point for NAD(+); it reads AIQFGGGNIGRG. The active site involves K213.

This sequence belongs to the mannitol dehydrogenase family. In terms of assembly, monomer.

The catalysed reaction is D-mannitol 1-phosphate + NAD(+) = beta-D-fructose 6-phosphate + NADH + H(+). Catalyzes the NAD(H)-dependent interconversion of D-fructose 6-phosphate and D-mannitol 1-phosphate in the mannitol metabolic pathway. The sequence is that of Mannitol-1-phosphate 5-dehydrogenase (mpdA) from Neosartorya fischeri (strain ATCC 1020 / DSM 3700 / CBS 544.65 / FGSC A1164 / JCM 1740 / NRRL 181 / WB 181) (Aspergillus fischerianus).